We begin with the raw amino-acid sequence, 232 residues long: Large ribosomal subunit protein uL1 (232 aa).

Belongs to the universal ribosomal protein uL1 family. As to quaternary structure, part of the 50S ribosomal subunit.

Binds directly to 23S rRNA. The L1 stalk is quite mobile in the ribosome, and is involved in E site tRNA release. Its function is as follows. Protein L1 is also a translational repressor protein, it controls the translation of the L11 operon by binding to its mRNA. The sequence is that of Large ribosomal subunit protein uL1 from Cereibacter sphaeroides (strain ATCC 17025 / ATH 2.4.3) (Rhodobacter sphaeroides).